We begin with the raw amino-acid sequence, 388 residues long: Processive diacylglycerol beta-glucosyltransferase (388 aa).

This sequence belongs to the glycosyltransferase 28 family. UgtP subfamily.

It localises to the cell membrane. It carries out the reaction a 1,2-diacyl-3-O-(beta-D-glucopyranosyl)-sn-glycerol + UDP-alpha-D-glucose = a 1,2-diacyl-3-O-(beta-D-Glc-(1-&gt;6)-beta-D-Glc)-sn-glycerol + UDP + H(+). The catalysed reaction is a 1,2-diacyl-3-O-(beta-D-Glc-(1-&gt;6)-beta-D-Glc)-sn-glycerol + UDP-alpha-D-glucose = a 1,2-diacyl-3-O-(beta-D-Glc-(1-&gt;6)-beta-D-Glc-(1-&gt;6)-beta-D-Glc)-sn-glycerol + UDP + H(+). It catalyses the reaction a 1,2-diacyl-sn-glycerol + UDP-alpha-D-glucose = a 1,2-diacyl-3-O-(beta-D-glucopyranosyl)-sn-glycerol + UDP + H(+). The protein operates within glycolipid metabolism; diglucosyl-diacylglycerol biosynthesis. Its function is as follows. Processive glucosyltransferase involved in the biosynthesis of both the bilayer- and non-bilayer-forming membrane glucolipids. Is able to successively transfer up to three glucosyl residues to diacylglycerol (DAG), thereby catalyzing the formation of beta-monoglucosyl-DAG (3-O-(beta-D-glucopyranosyl)-1,2-diacyl-sn-glycerol), beta-diglucosyl-DAG (3-O-(beta-D-glucopyranosyl-beta-(1-&gt;6)-D-glucopyranosyl)-1,2-diacyl-sn-glycerol) and beta-triglucosyl-DAG (3-O-(beta-D-glucopyranosyl-beta-(1-&gt;6)-D-glucopyranosyl-beta-(1-&gt;6)-D-glucopyranosyl)-1,2-diacyl-sn-glycerol). Beta-diglucosyl-DAG is the predominant glycolipid found in Bacillales and is also used as a membrane anchor for lipoteichoic acid (LTA). In Bacillus cereus (strain B4264), this protein is Processive diacylglycerol beta-glucosyltransferase.